Consider the following 334-residue polypeptide: Procathepsin L (334 aa).

Residues 1 to 17 (MTPLLLLAVLCLGTALA) form the signal peptide. Positions 18–113 (TPKFDQTFNA…RLFQEPLMLQ (96 aa)) are cleaved as a propeptide — activation peptide. Glutamate 122 serves as a coordination point for Zn(2+). Disulfide bonds link cysteine 135-cysteine 178 and cysteine 169-cysteine 211. The active site involves cysteine 138. The Zn(2+) site is built by glutamate 163, aspartate 184, glutamate 199, glutamate 205, aspartate 227, aspartate 250, histidine 253, aspartate 273, and aspartate 275. A disulfide bridge connects residues cysteine 269 and cysteine 322. Residue histidine 276 is part of the active site. The propeptide occupies 289 to 290 (DS). The active site involves asparagine 300.

Belongs to the peptidase C1 family. In terms of assembly, dimer of a heavy and a light chain linked by disulfide bonds. Interacts with Long isoform of CD74/Ii chain; the interaction stabilizes the conformation of mature CTSL. In terms of processing, during export along the endocytic pathway, pro-CTSL undergoes several proteolytic cleavages to generate the CTSL single-chain and two-chain mature forms, composed of a heavy chain linked to a light chain by disulfide bonds. Autocleavage; produces the single-chain CTSL after cleavage of the propeptide. The cleavage can be intermolecular. As to expression, both mature cathepsin L1 and procathepsin L are found in the upper epidermis. The lower epidermis predominantly contains procathepsin L. In seminiferous tubules expression is greater at stages VI-VII than at stages IX-XII.

It is found in the lysosome. Its subcellular location is the apical cell membrane. It localises to the cytoplasmic vesicle. The protein localises to the secretory vesicle. The protein resides in the chromaffin granule. It is found in the secreted. Its subcellular location is the extracellular space. The catalysed reaction is Specificity close to that of papain. As compared to cathepsin B, cathepsin L exhibits higher activity toward protein substrates, but has little activity on Z-Arg-Arg-NHMec, and no peptidyl-dipeptidase activity.. Inhibited by the propeptide produced by autocleavage. Long isoform of CD74/Ii chain stabilizes the conformation of mature CTSL by binding to its active site and serving as a chaperone to help maintain a pool of mature enzyme in endocytic compartments and extracellular space of APCs. IFNG enhances the conversion into the CTSL mature and active form. Inhibited by CST6. Inhibited by the glycopeptide antibiotic teicoplanin. Inhibited by amantadine. Thiol protease important for the overall degradation of proteins in lysosomes. Plays a critical for normal cellular functions such as general protein turnover, antigen processing and bone remodeling. Involved in the solubilization of cross-linked TG/thyroglobulin and in the subsequent release of thyroid hormone thyroxine (T4) by limited proteolysis of TG/thyroglobulin in the thyroid follicle lumen. In neuroendocrine chromaffin cells secretory vesicles, catalyzes the prohormone proenkephalin processing to the active enkephalin peptide neurotransmitter. In thymus, regulates CD4(+) T cell positive selection by generating the major histocompatibility complex class II (MHCII) bound peptide ligands presented by cortical thymic epithelial cells. Also mediates invariant chain processing in cortical thymic epithelial cells. Major elastin-degrading enzyme at neutral pH. Accumulates as a mature and active enzyme in the extracellular space of antigen presenting cells (APCs) to regulate degradation of the extracellular matrix in the course of inflammation. Secreted form generates endostatin from COL18A1. Critical for cardiac morphology and function. Plays an important role in hair follicle morphogenesis and cycling, as well as epidermal differentiation. Required for maximal stimulation of steroidogenesis by TIMP1. In Rattus norvegicus (Rat), this protein is Procathepsin L.